The following is a 138-amino-acid chain: Phospholipase A2 homolog mojave toxin acidic chain (138 aa).

A signal peptide spans M1–Y40. Disulfide bonds link C42/C131, C44/C60, C59/C111, C65/C138, C66/C104, C73/C97, and C91/C102. Residues T81–R83 constitute a propeptide that is removed on maturation. Position 84 is a pyrrolidone carboxylic acid (Q84). Residues D120 to F126 constitute a propeptide that is removed on maturation.

This sequence belongs to the phospholipase A2 family. Group II subfamily. D49 sub-subfamily. Heterodimer of an acidic and a basic chain. The acidic subunit is non-toxic, without enzymatic activity and comprises 3 peptides that are cross-linked by 5 disulfide bridges. The basic subunit is toxic, has phospholipase A2 activity and is composed of a single chain. The cofactor is Ca(2+). As to expression, expressed by the venom gland.

It localises to the secreted. Its function is as follows. Snake venom phospholipase A2 (PLA2) that inhibits neuromuscular transmission by blocking acetylcholine release from the nerve termini. This is Phospholipase A2 homolog mojave toxin acidic chain from Crotalus scutulatus scutulatus (Mojave rattlesnake).